Here is a 456-residue protein sequence, read N- to C-terminus: Glycerol-3-phosphate acyltransferase 4 (456 aa).

The N-terminal stretch at 1–37 (MFLLLPFDSLIVNLLGISLTVLFTLLLVFIIVPAIFG) is a signal peptide. Transmembrane regions (helical) follow at residues 156–176 (ISLR…CFLL) and 180–200 (IALA…VGYL). Asparagine 247 is a glycosylation site (N-linked (GlcNAc...) asparagine). The short motif at 248 to 253 (HTSPID) is the HXXXXD motif element. Residues asparagine 327, asparagine 328, and asparagine 362 are each glycosylated (N-linked (GlcNAc...) asparagine).

The protein belongs to the 1-acyl-sn-glycerol-3-phosphate acyltransferase family. Ubiquitous. High levels in testis. Relatively high level of expression in skeletal muscle and heart. Relatively low level of expression in lung.

It localises to the endoplasmic reticulum membrane. It catalyses the reaction sn-glycerol 3-phosphate + an acyl-CoA = a 1-acyl-sn-glycero-3-phosphate + CoA. The catalysed reaction is dodecanoyl-CoA + sn-glycerol 3-phosphate = 1-dodecanoyl-sn-glycerol 3-phosphate + CoA. It carries out the reaction sn-glycerol 3-phosphate + hexadecanoyl-CoA = 1-hexadecanoyl-sn-glycero-3-phosphate + CoA. The enzyme catalyses sn-glycerol 3-phosphate + octadecanoyl-CoA = 1-octadecanoyl-sn-glycero-3-phosphate + CoA. It catalyses the reaction sn-glycerol 3-phosphate + (9Z)-octadecenoyl-CoA = 1-(9Z-octadecenoyl)-sn-glycero-3-phosphate + CoA. The catalysed reaction is (9Z,12Z)-octadecadienoyl-CoA + sn-glycerol 3-phosphate = 1-(9Z,12Z)-octadecadienoyl-sn-glycero-3-phosphate + CoA. It functions in the pathway phospholipid metabolism; CDP-diacylglycerol biosynthesis; CDP-diacylglycerol from sn-glycerol 3-phosphate: step 1/3. With respect to regulation, inhibited by N-ethylmaleimide (NEM). Functionally, converts glycerol-3-phosphate to 1-acyl-sn-glycerol-3-phosphate (lysophosphatidic acid or LPA) by incorporating an acyl moiety at the sn-1 position of the glycerol backbone. Active against both saturated and unsaturated long-chain fatty acyl-CoAs. Protects cells against lipotoxicity. The chain is Glycerol-3-phosphate acyltransferase 4 from Homo sapiens (Human).